The sequence spans 297 residues: Tyrosine recombinase XerD (297 aa).

Residues 2–86 (KKLDPIIEQF…CLRKFFRFLC (85 aa)) enclose the Core-binding (CB) domain. The 185-residue stretch at 107 to 291 (QLPKSLSEEQ…AKTRLKSIHK (185 aa)) folds into the Tyr recombinase domain. Residues Arg-147, Lys-171, His-243, Arg-246, and His-269 contribute to the active site. The O-(3'-phospho-DNA)-tyrosine intermediate role is filled by Tyr-278.

Belongs to the 'phage' integrase family. XerD subfamily. Forms a cyclic heterotetrameric complex composed of two molecules of XerC and two molecules of XerD.

It is found in the cytoplasm. Site-specific tyrosine recombinase, which acts by catalyzing the cutting and rejoining of the recombining DNA molecules. The XerC-XerD complex is essential to convert dimers of the bacterial chromosome into monomers to permit their segregation at cell division. It also contributes to the segregational stability of plasmids. In Haemophilus ducreyi (strain 35000HP / ATCC 700724), this protein is Tyrosine recombinase XerD.